The primary structure comprises 209 residues: Translation initiation factor 2 subunit beta (209 aa).

Residues 144–202 form the TRAM domain; sequence TIEEGKEYVVEITEVGSSGEGRTNYKGYTIFVPGAKRGETVKVRIKKVKNDVAIGEIIE.

It belongs to the eIF-2-beta/eIF-5 family. As to quaternary structure, heterotrimer composed of an alpha, a beta and a gamma chain.

EIF-2 functions in the early steps of protein synthesis by forming a ternary complex with GTP and initiator tRNA. The sequence is that of Translation initiation factor 2 subunit beta (eif2b) from Thermoplasma acidophilum (strain ATCC 25905 / DSM 1728 / JCM 9062 / NBRC 15155 / AMRC-C165).